A 149-amino-acid polypeptide reads, in one-letter code: MQVNIFYIQKSDEFKTWSEKYSKLISKYGTLKEINVFNKKIALAQNLNAIEAKKSYEEAFMPYKKGYCIALDERGKDLTSIEFAKLIQDKNELSFFIGGAYGLREEFNQSLDFRLSLSKLTLAHQFVKTLLLEQIYRAFCINNNHPYHK.

Residues Leu-71, Gly-98, and Leu-117–Leu-122 contribute to the S-adenosyl-L-methionine site.

It belongs to the RNA methyltransferase RlmH family. Homodimer.

Its subcellular location is the cytoplasm. The enzyme catalyses pseudouridine(1915) in 23S rRNA + S-adenosyl-L-methionine = N(3)-methylpseudouridine(1915) in 23S rRNA + S-adenosyl-L-homocysteine + H(+). Functionally, specifically methylates the pseudouridine at position 1915 (m3Psi1915) in 23S rRNA. In Campylobacter jejuni subsp. doylei (strain ATCC BAA-1458 / RM4099 / 269.97), this protein is Ribosomal RNA large subunit methyltransferase H.